We begin with the raw amino-acid sequence, 610 residues long: UvrABC system protein C (610 aa).

The 79-residue stretch at 16–94 folds into the GIY-YIG domain; sequence SQPGVYRMYD…IKLYQPRYNV (79 aa). A UVR domain is found at 204-239; it reads DQVLTQLIARMEKASQNLEFEEAARIRDQIQAVRRV.

Belongs to the UvrC family. As to quaternary structure, interacts with UvrB in an incision complex.

Its subcellular location is the cytoplasm. In terms of biological role, the UvrABC repair system catalyzes the recognition and processing of DNA lesions. UvrC both incises the 5' and 3' sides of the lesion. The N-terminal half is responsible for the 3' incision and the C-terminal half is responsible for the 5' incision. The sequence is that of UvrABC system protein C from Escherichia fergusonii (strain ATCC 35469 / DSM 13698 / CCUG 18766 / IAM 14443 / JCM 21226 / LMG 7866 / NBRC 102419 / NCTC 12128 / CDC 0568-73).